Consider the following 213-residue polypeptide: 5-methylthioribulose-1-phosphate/5-deoxyribulose-1-phosphate aldolase (213 aa).

The active-site Proton donor/acceptor is the glutamate 73. 4 residues coordinate Co(2+): glutamate 73, histidine 92, histidine 94, and histidine 155.

This sequence belongs to the aldolase class II family. The cofactor is Co(2+).

The enzyme catalyses 5-(methylsulfanyl)-D-ribulose 1-phosphate = 2-(methylsulfanyl)acetaldehyde + dihydroxyacetone phosphate. It carries out the reaction 5-deoxy-D-ribulose 1-phosphate = dihydroxyacetone phosphate + acetaldehyde. It participates in amino-acid biosynthesis; L-methionine biosynthesis via salvage pathway. Its function is as follows. Uses 5-methylthioribulose-1-phosphate to yield 2-(methylthio)acetaldehyde and dihydroxyacetone phosphate. Can also use 5-deoxyribulose 1-phosphate to yield acetaldehyde and dihydroxyacetone phosphate. Part of a bifunctional DHAP-shunt salvage pathway for SAM by-products. In Escherichia coli O45:K1 (strain S88 / ExPEC), this protein is 5-methylthioribulose-1-phosphate/5-deoxyribulose-1-phosphate aldolase.